The primary structure comprises 429 residues: Glutamate-1-semialdehyde 2,1-aminomutase 2 (429 aa).

K268 is subject to N6-(pyridoxal phosphate)lysine.

It belongs to the class-III pyridoxal-phosphate-dependent aminotransferase family. HemL subfamily. In terms of assembly, homodimer. Pyridoxal 5'-phosphate is required as a cofactor.

It is found in the cytoplasm. It carries out the reaction (S)-4-amino-5-oxopentanoate = 5-aminolevulinate. It participates in porphyrin-containing compound metabolism; protoporphyrin-IX biosynthesis; 5-aminolevulinate from L-glutamyl-tRNA(Glu): step 2/2. The sequence is that of Glutamate-1-semialdehyde 2,1-aminomutase 2 from Staphylococcus aureus (strain MSSA476).